Consider the following 197-residue polypeptide: Sodium/potassium-transporting ATPase subunit beta-1-interacting protein 3 (197 aa).

Transmembrane regions (helical) follow at residues 2-22, 35-55, 62-82, and 152-172; these read GCCT…VSAL, APIL…FGTI, IMVY…IICF, and VQIL…SISM.

It belongs to the NKAIN family. Interacts with ATP1B1.

The protein localises to the cell membrane. The chain is Sodium/potassium-transporting ATPase subunit beta-1-interacting protein 3 (NKAIN3) from Homo sapiens (Human).